Reading from the N-terminus, the 582-residue chain is Leucine-rich repeat protein SHOC-2 (582 aa).

2 stretches are compositionally biased toward basic and acidic residues: residues Met-1–Lys-29 and Lys-36–Ser-57. The disordered stretch occupies residues Met-1 to Ala-88. The short motif at Gly-63–Phe-66 is the RVxF motif; important for interaction with PP1c element. LRR repeat units lie at residues Asn-101–Leu-122, Gln-124–Leu-145, Asn-147–Lys-169, Lys-170–Leu-191, Ser-193–Leu-214, Lys-216–Leu-237, Asn-239–Cys-260, Gln-262–Leu-283, Ser-285–Ser-307, Ala-308–Ser-329, Lys-332–Gln-353, Thr-356–Arg-377, Val-380–Thr-400, Ser-403–Leu-424, Ser-426–Arg-448, Lys-449–Leu-470, Asp-472–Thr-494, Asn-495–Leu-516, Asn-518–Cys-540, and Lys-542–Gly-563.

Belongs to the SHOC2 family. Component of the SHOC2-MRAS-PP1c (SMP) complex consisting of SHOC2, GTP-bound M-Ras/MRAS and the catalytic subunit of protein phosphatase 1 (either PPP1CA, PPP1CB or PPP1CC). SHOC2 and PP1c preferably bind M-Ras/MRAS, but they also bind K-Ras/KRAS, N-Ras/NRAS and H-Ras/HRAS; these interactions are GTP-dependent and both SHOC2 and PP1c are required to form a stable complex. Interacts with PP1c in the absence of Ras GTPases. Interacts with M-Ras/MRAS and RAF1. Interacts with ERBIN; disrupts the interaction with RAF1 and Ras, preventing the activation of the Ras signaling pathway. Interacts with LZTR1.

The protein resides in the cytoplasm. Its subcellular location is the nucleus. Its function is as follows. Core component of the SHOC2-MRAS-PP1c (SMP) holophosphatase complex that regulates activation of the MAPK pathway. Acts as a scaffolding protein in the SMP complex. The SMP complex specifically dephosphorylates the inhibitory phosphorylation at 'Ser-259' of RAF1 kinase, 'Ser-365' of BRAF kinase and 'Ser-214' of ARAF kinase, stimulating their kinase activities. The SMP complex enhances the dephosphorylation activity and substrate specificity of PP1c. The chain is Leucine-rich repeat protein SHOC-2 (SHOC2) from Homo sapiens (Human).